The following is a 777-amino-acid chain: Subtilisin-like protease SBT3.7 (777 aa).

An N-terminal signal peptide occupies residues 1-22; the sequence is MRNHRTSIFVVLSLVIILNGQS. The propeptide at 23-113 is activation peptide; sequence GFLPRAGAES…VIPDRFYKPA (91 aa). Positions 34-111 constitute an Inhibitor I9 domain; that stretch reads VHIVYLGEKQ…VHVIPDRFYK (78 aa). The Peptidase S8 domain occupies 117–624; it reads TWDYLGLSPT…GGLVNPEKAT (508 aa). N133 carries an N-linked (GlcNAc...) asparagine glycan. Residue D147 is the Charge relay system of the active site. 2 N-linked (GlcNAc...) asparagine glycosylation sites follow: N180 and N206. The active-site Charge relay system is the H222. N-linked (GlcNAc...) asparagine glycosylation is found at N237, N397, N412, and N540. Positions 386–481 constitute a PA domain; the sequence is SLVYPENPGN…ELGTYILFYI (96 aa). S555 acts as the Charge relay system in catalysis. 3 N-linked (GlcNAc...) asparagine glycosylation sites follow: N647, N723, and N758.

It belongs to the peptidase S8 family.

The protein resides in the secreted. This is Subtilisin-like protease SBT3.7 from Arabidopsis thaliana (Mouse-ear cress).